Reading from the N-terminus, the 344-residue chain is Protein POLAR LOCALIZATION DURING ASYMMETRIC DIVISION AND REDISTRIBUTION (344 aa).

Thr19 carries the post-translational modification Phosphothreonine; by ASK7. Residue Ser79 is modified to Phosphoserine; by ASK7. Phosphothreonine; by ASK7 is present on residues Thr84 and Thr86. Phosphoserine; by ASK7 occurs at positions 91 and 94. Residues Thr193, Thr217, and Thr233 each carry the phosphothreonine; by ASK7 modification. Ser235 is modified (phosphoserine; by ASK7). Positions 262 to 297 (LETRQQEELVKLETALNRVERRLQEKETEVSWWKDA) form a coiled coil. Phosphoserine; by ASK7 occurs at positions 308, 309, 320, 321, and 336.

As to quaternary structure, component of a complex made of POLAR, BASL, ASK7/BIN2 and ASK3/SK12. Interacts with BASL, ASK7/BIN2 and ASK3/SK12. Phosphorylation by ASK7/BIN2 is increases turnover. In terms of tissue distribution, expressed in stomatal lineage cells with asymmetric division potential.

The protein localises to the cytoplasm. Its subcellular location is the cell cortex. In terms of biological role, regulates asymmetric cell division (ACD), especially in stomatal-lineage cells. Acts as a stomatal lineage scaffold which regulates subcellular localization and transient polarization of kinases (e.g. ASK7/BIN2 and ASK3/SK12) involved in ACD in a BASL-dependent manner. Promotes the differentiation of both pavement cells and stomata. In Arabidopsis thaliana (Mouse-ear cress), this protein is Protein POLAR LOCALIZATION DURING ASYMMETRIC DIVISION AND REDISTRIBUTION.